A 313-amino-acid chain; its full sequence is Homoserine O-succinyltransferase (313 aa).

Cysteine 142 serves as the catalytic Acyl-thioester intermediate. The substrate site is built by lysine 163 and serine 192. Residue histidine 235 is the Proton acceptor of the active site. Glutamate 237 is a catalytic residue. Position 249 (arginine 249) interacts with substrate.

It belongs to the MetA family.

It localises to the cytoplasm. It carries out the reaction L-homoserine + succinyl-CoA = O-succinyl-L-homoserine + CoA. Its pathway is amino-acid biosynthesis; L-methionine biosynthesis via de novo pathway; O-succinyl-L-homoserine from L-homoserine: step 1/1. In terms of biological role, transfers a succinyl group from succinyl-CoA to L-homoserine, forming succinyl-L-homoserine. The protein is Homoserine O-succinyltransferase of Shewanella baltica (strain OS195).